The chain runs to 218 residues: 3,4-dihydroxy-2-butanone 4-phosphate synthase (218 aa).

D-ribulose 5-phosphate-binding positions include 38–39, Asp-43, 151–155, and Glu-175; these read RE and RRGHT. Residue Glu-39 coordinates Mg(2+). A Mg(2+)-binding site is contributed by His-154.

This sequence belongs to the DHBP synthase family. As to quaternary structure, homodimer. Mg(2+) serves as cofactor. Mn(2+) is required as a cofactor.

The enzyme catalyses D-ribulose 5-phosphate = (2S)-2-hydroxy-3-oxobutyl phosphate + formate + H(+). Its pathway is cofactor biosynthesis; riboflavin biosynthesis; 2-hydroxy-3-oxobutyl phosphate from D-ribulose 5-phosphate: step 1/1. Functionally, catalyzes the conversion of D-ribulose 5-phosphate to formate and 3,4-dihydroxy-2-butanone 4-phosphate. The protein is 3,4-dihydroxy-2-butanone 4-phosphate synthase of Vibrio vulnificus (strain CMCP6).